Consider the following 29-residue polypeptide: Cytochrome b6-f complex subunit 8 (29 aa).

Residues 3–23 form a helical membrane-spanning segment; it reads IVSIGWAALMVVFTFSLSLVV.

It belongs to the PetN family. In terms of assembly, the 4 large subunits of the cytochrome b6-f complex are cytochrome b6, subunit IV (17 kDa polypeptide, PetD), cytochrome f and the Rieske protein, while the 4 small subunits are PetG, PetL, PetM and PetN. The complex functions as a dimer.

It is found in the plastid. It localises to the chloroplast thylakoid membrane. In terms of biological role, component of the cytochrome b6-f complex, which mediates electron transfer between photosystem II (PSII) and photosystem I (PSI), cyclic electron flow around PSI, and state transitions. The polypeptide is Cytochrome b6-f complex subunit 8 (Zygnema circumcarinatum (Green alga)).